Reading from the N-terminus, the 450-residue chain is Glucose-6-phosphate isomerase (450 aa).

Residue Thr-39 is modified to Phosphothreonine. Catalysis depends on Glu-291, which acts as the Proton donor. Catalysis depends on residues His-312 and Lys-426.

It belongs to the GPI family.

The protein resides in the cytoplasm. It carries out the reaction alpha-D-glucose 6-phosphate = beta-D-fructose 6-phosphate. It functions in the pathway carbohydrate biosynthesis; gluconeogenesis. It participates in carbohydrate degradation; glycolysis; D-glyceraldehyde 3-phosphate and glycerone phosphate from D-glucose: step 2/4. In terms of biological role, catalyzes the reversible isomerization of glucose-6-phosphate to fructose-6-phosphate. This Halalkalibacterium halodurans (strain ATCC BAA-125 / DSM 18197 / FERM 7344 / JCM 9153 / C-125) (Bacillus halodurans) protein is Glucose-6-phosphate isomerase.